A 339-amino-acid polypeptide reads, in one-letter code: MVREEITGSTQTLEWKCVESRVDSKRLYYGRFILSPLRKGQADTVGIALRRALLGEIEGTCITRAKFGNVPHEYSTIVGIEESIQEILLNLKEIVLRSNLYGVRDASICVKGPRYITAQDIILPPSVEIVDTTQPIANLREPVDFCIELQIKRDRAYHTELRKNSQDGSYPIDAVFMPVRNVNYSIFSCGNGNEKHEILFLEIWTNGSLTPKEALYEASRNLIDLFLPFLHTEEEGTSFEENKNRLTPPLLTFQKRFTNLKKNKKGIPLNCIFIDQLELPSRTYNCLKRANIHTLLDLLSKTEEDLMQINSFRMEDGKLIWDTLEKHLPIDLPKNKFSL.

The segment at 1–233 is alpha N-terminal domain (alpha-NTD); sequence MVREEITGST…DLFLPFLHTE (233 aa). The tract at residues 264-339 is alpha C-terminal domain (alpha-CTD); that stretch reads KKGIPLNCIF…IDLPKNKFSL (76 aa).

The protein belongs to the RNA polymerase alpha chain family. In plastids the minimal PEP RNA polymerase catalytic core is composed of four subunits: alpha, beta, beta', and beta''. When a (nuclear-encoded) sigma factor is associated with the core the holoenzyme is formed, which can initiate transcription.

It is found in the plastid. The protein localises to the chloroplast. The catalysed reaction is RNA(n) + a ribonucleoside 5'-triphosphate = RNA(n+1) + diphosphate. DNA-dependent RNA polymerase catalyzes the transcription of DNA into RNA using the four ribonucleoside triphosphates as substrates. The sequence is that of DNA-directed RNA polymerase subunit alpha from Zea mays (Maize).